Consider the following 401-residue polypeptide: MSKKTIANLTSADLSGKRVLVRADFNVPLDGDGKITDDTRIRAALPTIQDLTSKGAKVILASHFGRPKGQVNESMRLTPVAARLSELLGQAVTKCDDCIGDEVAAKVGALQNGQVALLENVRFHSGEEANDPEFARQLASVADLYVNDAFGTAHRAHASTEGVTHHLSPSVAGYLIEKELKYLQAAIEGPQRPLAAIVGGSKVSSKIGVIETLLDKVDKLLIGGGMIFTFYKARGLAVGKSLVEEDKLDLARTLEAKAKEKGVALLLPSDVVVADNFAADANAQTVSINNIPDGWMGLDIGPNSVKEFQAALSDCKTVIWNGPMGVFEFDKFAAGTDAVAHSLAAITETGADTIIGGGDSVAAVEKVGVAEKMSHISTGGGASLELLEGKVLPGIAALDEA.

Residues 24–26 (DFN), R40, 63–66 (HFGR), R122, and R155 each bind substrate. ATP-binding positions include K206, G297, E328, and 357 to 360 (GGDS).

Belongs to the phosphoglycerate kinase family. As to quaternary structure, monomer.

The protein localises to the cytoplasm. It catalyses the reaction (2R)-3-phosphoglycerate + ATP = (2R)-3-phospho-glyceroyl phosphate + ADP. It participates in carbohydrate degradation; glycolysis; pyruvate from D-glyceraldehyde 3-phosphate: step 2/5. The protein is Phosphoglycerate kinase of Acaryochloris marina (strain MBIC 11017).